The primary structure comprises 538 residues: Acetylcholine receptor subunit alpha-type acr-7 (538 aa).

Positions 1–27 (MMVQSIQIVLPVALFFLIVFNGFTVEG) are cleaved as a signal peptide. Topologically, residues 28-250 (SKKEAQLYRD…LHLRRRTFYY (223 aa)) are extracellular. N-linked (GlcNAc...) asparagine glycosylation is found at N41 and N101. Intrachain disulfides connect C160/C174 and C229/C230. A run of 3 helical transmembrane segments spans residues 251–271 (VFNV…AFCL), 280–300 (IGLQ…LSEM), and 313–333 (VFFS…ILVL). The Cytoplasmic segment spans residues 334 to 513 (NIRYRQITNH…FAAQAVDRFC (180 aa)). A helical transmembrane segment spans residues 514 to 534 (LIIFTIVFIICCFIFVAIPPI).

The protein belongs to the ligand-gated ion channel (TC 1.A.9) family. Acetylcholine receptor (TC 1.A.9.1) subfamily. Forms a homooligomeric channel blocked by alpha-bungarotoxin. The structure is probably pentameric.

The protein resides in the postsynaptic cell membrane. It is found in the cell membrane. Its function is as follows. After binding acetylcholine, the AChR responds by an extensive change in conformation that affects all subunits and leads to opening of an ion-conducting channel across the plasma membrane. The chain is Acetylcholine receptor subunit alpha-type acr-7 (acr-7) from Caenorhabditis elegans.